We begin with the raw amino-acid sequence, 197 residues long: Holliday junction branch migration complex subunit RuvA (197 aa).

Residues 1 to 64 are domain I; that stretch reads MIASIRGILI…EDSLTLYGFE (64 aa). Residues 65 to 145 are domain II; the sequence is TVEQRQLFET…GLPTGAAVTP (81 aa). The flexible linker stretch occupies residues 146–148; it reads AVA. The tract at residues 148–197 is domain III; the sequence is AAANAELSEALISLGFTDAEAAAAIAALPSDAPPDLEERVRLALRYFSAS.

This sequence belongs to the RuvA family. Homotetramer. Forms an RuvA(8)-RuvB(12)-Holliday junction (HJ) complex. HJ DNA is sandwiched between 2 RuvA tetramers; dsDNA enters through RuvA and exits via RuvB. An RuvB hexamer assembles on each DNA strand where it exits the tetramer. Each RuvB hexamer is contacted by two RuvA subunits (via domain III) on 2 adjacent RuvB subunits; this complex drives branch migration. In the full resolvosome a probable DNA-RuvA(4)-RuvB(12)-RuvC(2) complex forms which resolves the HJ.

The protein resides in the cytoplasm. In terms of biological role, the RuvA-RuvB-RuvC complex processes Holliday junction (HJ) DNA during genetic recombination and DNA repair, while the RuvA-RuvB complex plays an important role in the rescue of blocked DNA replication forks via replication fork reversal (RFR). RuvA specifically binds to HJ cruciform DNA, conferring on it an open structure. The RuvB hexamer acts as an ATP-dependent pump, pulling dsDNA into and through the RuvAB complex. HJ branch migration allows RuvC to scan DNA until it finds its consensus sequence, where it cleaves and resolves the cruciform DNA. The polypeptide is Holliday junction branch migration complex subunit RuvA (Roseiflexus sp. (strain RS-1)).